Here is a 465-residue protein sequence, read N- to C-terminus: Ribulose bisphosphate carboxylase large chain (465 aa).

The residue at position 4 (Lys-4) is an N6,N6,N6-trimethyllysine. 2 residues coordinate substrate: Asn-113 and Thr-163. Lys-165 (proton acceptor) is an active-site residue. Residue Lys-167 participates in substrate binding. 3 residues coordinate Mg(2+): Lys-191, Asp-193, and Glu-194. The residue at position 191 (Lys-191) is an N6-carboxylysine. The Proton acceptor role is filled by His-284. Substrate contacts are provided by Arg-285, His-317, and Ser-369.

Belongs to the RuBisCO large chain family. Type I subfamily. Heterohexadecamer of 8 large chains and 8 small chains; disulfide-linked. The disulfide link is formed within the large subunit homodimers. The cofactor is Mg(2+). Post-translationally, the disulfide bond which can form in the large chain dimeric partners within the hexadecamer appears to be associated with oxidative stress and protein turnover.

Its subcellular location is the plastid. The protein resides in the chloroplast. The enzyme catalyses 2 (2R)-3-phosphoglycerate + 2 H(+) = D-ribulose 1,5-bisphosphate + CO2 + H2O. It carries out the reaction D-ribulose 1,5-bisphosphate + O2 = 2-phosphoglycolate + (2R)-3-phosphoglycerate + 2 H(+). Functionally, ruBisCO catalyzes two reactions: the carboxylation of D-ribulose 1,5-bisphosphate, the primary event in carbon dioxide fixation, as well as the oxidative fragmentation of the pentose substrate in the photorespiration process. Both reactions occur simultaneously and in competition at the same active site. The polypeptide is Ribulose bisphosphate carboxylase large chain (Hamamelis mollis (Chinese witch hazel)).